A 165-amino-acid polypeptide reads, in one-letter code: MARKVIALAFLLLLTISLSKSNAARVIKYNGGGSGGGGGGGGGGGGGGNGSGSGSGYGYGYGKAGGQSGGGQGSGGGGGGGGGGGNGSGSGSGYGYGYGQGNGGAQGQGSGGGGGGGGGGGGGGSGQGSGSGYGYGYGKGGGGGGGGGGGGGGGGGGSGYVGKHE.

The N-terminal stretch at 1-23 is a signal peptide; that stretch reads MARKVIALAFLLLLTISLSKSNA. 2 R2; Tyr-rich repeats span residues 56-62 and 93-99; these read GYGYGYG. Positions 105-125 are disordered; sequence AQGQGSGGGGGGGGGGGGGGS. An R2; Tyr-rich repeat occupies 132-138; sequence GYGYGYG. Residues 146–165 form a disordered region; that stretch reads GGGGGGGGGGGGSGYVGKHE.

The protein localises to the secreted. The protein resides in the cell wall. Functionally, responsible for plasticity of the cell wall. In Oryza sativa subsp. indica (Rice), this protein is Putative glycine-rich cell wall structural protein 1 (GRP-1).